Consider the following 160-residue polypeptide: GTP-dependent dephospho-CoA kinase (160 aa).

Asp45, Ile46, Val47, Asp59, Lys61, Glu108, and Asp130 together coordinate GTP.

Belongs to the GTP-dependent DPCK family.

The catalysed reaction is 3'-dephospho-CoA + GTP = GDP + CoA + H(+). It functions in the pathway cofactor biosynthesis; coenzyme A biosynthesis. Its function is as follows. Catalyzes the GTP-dependent phosphorylation of the 3'-hydroxyl group of dephosphocoenzyme A to form coenzyme A (CoA). This chain is GTP-dependent dephospho-CoA kinase, found in Staphylothermus marinus (strain ATCC 43588 / DSM 3639 / JCM 9404 / F1).